Here is a 201-residue protein sequence, read N- to C-terminus: Ras-related protein Rab-9B (201 aa).

Residues Val-18, Gly-19, Lys-20, Ser-21, Ser-22, Asp-33, Ser-34, Ala-36, His-38, and Thr-39 each contribute to the GTP site. Residue Ser-21 participates in Mg(2+) binding. The short motif at 31–42 (KFDSQAFHTIGV) is the Switch 1 element. The residue at position 34 (Ser-34) is a Phosphoserine. Mg(2+) is bound by residues Thr-39 and Asp-62. Positions 64 to 78 (AGQERFKSLRTPFYR) match the Switch 2 motif. GTP-binding residues include Gly-65, Asn-124, Lys-125, Ala-155, and Lys-156. Residues Cys-200 and Cys-201 are each lipidated (S-geranylgeranyl cysteine).

The protein belongs to the small GTPase superfamily. Rab family. As to quaternary structure, interacts (GTP-bound form) with SGSM1; the GDP-bound form has much lower affinity for SGSM1. The GTP-bound form but not the GDP-bound form interacts with HPS4 and the BLOC-3 complex (heterodimer of HPS1 and HPS4) but does not interact with HPS1 alone. Interacts (GTP-bound form) with NDE1. Mg(2+) serves as cofactor.

Its subcellular location is the cell membrane. It is found in the cytoplasmic vesicle. The protein localises to the phagosome membrane. The catalysed reaction is GTP + H2O = GDP + phosphate + H(+). Regulated by guanine nucleotide exchange factors (GEFs) which promote the exchange of bound GDP for free GTP. Regulated by GTPase activating proteins (GAPs) which increase the GTP hydrolysis activity. Inhibited by GDP dissociation inhibitors (GDIs). The small GTPases Rab are key regulators of intracellular membrane trafficking, from the formation of transport vesicles to their fusion with membranes. Rabs cycle between an inactive GDP-bound form and an active GTP-bound form that is able to recruit to membranes different sets of downstream effectors directly responsible for vesicle formation, movement, tethering and fusion. RAB9B is involved in the transport of proteins between the endosomes and the trans Golgi network. May use NDE1/NDEL1 as an effector to interact with the dynein motor complex in order to control retrograde trafficking of RAB9-associated late endosomes to the TGN. This chain is Ras-related protein Rab-9B (RAB9B), found in Pongo abelii (Sumatran orangutan).